Consider the following 177-residue polypeptide: Large ribosomal subunit protein uL16 (177 aa).

This sequence belongs to the universal ribosomal protein uL16 family.

This is Large ribosomal subunit protein uL16 from Natronomonas pharaonis (strain ATCC 35678 / DSM 2160 / CIP 103997 / JCM 8858 / NBRC 14720 / NCIMB 2260 / Gabara) (Halobacterium pharaonis).